The following is a 712-amino-acid chain: Cyclomaltodextrin glucanotransferase (712 aa).

A signal peptide spans 1-27 (MKRFMKLTAVWTLWLSLTLGLLSPVHA). The A1 stretch occupies residues 28–165 (APDTSVSNKQ…NIKVIIDFAP (138 aa)). Ca(2+)-binding residues include Asp54, Asn56, Asn59, and Asn60. Cys70 and Cys77 form a disulfide bridge. Positions 78 and 80 each coordinate Ca(2+). A substrate-binding site is contributed by 127–128 (YW). Ca(2+) is bound at residue Asn166. The b stretch occupies residues 166–229 (NHTSPASSDD…NLYDLADLNH (64 aa)). His167 contacts substrate. Ile217 provides a ligand contact to Ca(2+). 220 to 223 (NLYD) contributes to the substrate binding site. Asp226 contacts Ca(2+). Residues 230–433 (NNSSVDVYLK…LRKSNPAIAY (204 aa)) form an A2 region. A substrate-binding site is contributed by Arg254. Asp256 serves as the catalytic Nucleophile. 259–260 (KH) contacts substrate. His260 lines the Ca(2+) pocket. Glu284 (proton donor) is an active-site residue. The substrate site is built by His354, Asp398, and Arg402. The tract at residues 434–522 (GSTQERWINN…GTAVWQYTTD (89 aa)) is c. A d region spans residues 523–608 (ATAPINGNVG…SNIYDNFEVL (86 aa)). The region spanning 526–606 (PINGNVGPMM…AASNIYDNFE (81 aa)) is the IPT/TIG domain. One can recognise a CBM20 domain in the interval 607–712 (VLTGDQVTVR…TATVNVNWQP (106 aa)). The tract at residues 609 to 712 (TGDQVTVRFV…TATVNVNWQP (104 aa)) is e.

Belongs to the glycosyl hydrolase 13 family. In terms of assembly, monomer. The cofactor is Ca(2+).

It localises to the secreted. The enzyme catalyses Cyclizes part of a (1-&gt;4)-alpha-D-glucan chain by formation of a (1-&gt;4)-alpha-D-glucosidic bond.. This chain is Cyclomaltodextrin glucanotransferase (cgt), found in Bacillus sp. (strain 38-2).